Consider the following 254-residue polypeptide: Transcription factor bHLH51 (254 aa).

One can recognise a bHLH domain in the interval 62-111; it reads SLSRSHRLAEKRRRDRINSHLTALRKLVPNSDKLDKAALLATVIEQVKEL.

In terms of assembly, homodimer. As to expression, expressed constitutively in roots, stems, and flowers.

It is found in the nucleus. The polypeptide is Transcription factor bHLH51 (BHLH51) (Arabidopsis thaliana (Mouse-ear cress)).